We begin with the raw amino-acid sequence, 150 residues long: Arginine repressor (150 aa).

Belongs to the ArgR family.

The protein resides in the cytoplasm. Its pathway is amino-acid biosynthesis; L-arginine biosynthesis [regulation]. Regulates arginine biosynthesis genes. The chain is Arginine repressor from Staphylococcus epidermidis (strain ATCC 35984 / DSM 28319 / BCRC 17069 / CCUG 31568 / BM 3577 / RP62A).